Here is a 223-residue protein sequence, read N- to C-terminus: Zinc-finger homeodomain protein 12 (223 aa).

Positions 1–20 (MSSLSKPNRQFLSPTTNNQD) are enriched in polar residues. A disordered region spans residues 1–24 (MSSLSKPNRQFLSPTTNNQDTGRE). The ZF-HD dimerization-type; degenerate zinc-finger motif lies at 37-88 (YNECLKNHAVSLGGHALDGCGEFTPKSTTILTDPPSLRCDACGCHRNFHRRS). Positions 147 to 204 (KKHKRTKFTAEQKVKMRGFAERAGWKINGWDEKWVREFCSEVGIERKVLKVWIHNNKY) form a DNA-binding region, homeobox; atypical.

Homo- and heterodimer with other ZFHD proteins. Interacts with ZHD11.

It is found in the nucleus. Functionally, putative transcription factor. The polypeptide is Zinc-finger homeodomain protein 12 (ZHD12) (Arabidopsis thaliana (Mouse-ear cress)).